A 206-amino-acid chain; its full sequence is Elongation factor 1-beta (206 aa).

Residue alanine 2 is modified to N-acetylalanine. Lysine 13 is covalently cross-linked (Glycyl lysine isopeptide (Lys-Gly) (interchain with G-Cter in ubiquitin)). Residues serine 31 and serine 86 each carry the phosphoserine modification.

This sequence belongs to the EF-1-beta/EF-1-delta family. In terms of assembly, the eukaryotic elongation factor 1 complex (eEF1) is probably a heterohexamer. Two trimeric complexes, each composed of eEF1A (TEF1 or TEF2), eEF1Balpha (EFB1) and eEF1Bgamma (CAM1 or TEF4), are probably dimerized via the eF1Bgamma subunits. eEF1Balpha interacts directly with eEF1A. eEF1Balpha and eEF1Bgamma form the eEF1B subcomplex with the GEF activity. Post-translationally, S-thiolated in response to oxidative stress, probably inhibiting the protein and causing a reduction in protein synthesis.

The protein operates within protein biosynthesis; polypeptide chain elongation. In terms of biological role, catalytic subunit of the guanine nucleotide exchange factor (GEF) (eEF1B subcomplex) of the eukaryotic elongation factor 1 complex (eEF1). Stimulates the exchange of GDP for GTP on elongation factor 1A (eEF1A), probably by displacing GDP from the nucleotide binding pocket in eEF1A. The 30-fold higher concentration of GTP compared to GDP in cells favors the formation of eEF1A-GTP, which rapidly forms a ternary complex with aminoacyl-tRNA that in turn displaces eEF1B from the complex. In Saccharomyces cerevisiae (strain ATCC 204508 / S288c) (Baker's yeast), this protein is Elongation factor 1-beta (EFB1).